The primary structure comprises 180 residues: UPF0227 protein YcfP (180 aa).

Belongs to the UPF0227 family.

This Salmonella agona (strain SL483) protein is UPF0227 protein YcfP.